A 66-amino-acid chain; its full sequence is Large ribosomal subunit protein bL33c (66 aa).

Belongs to the bacterial ribosomal protein bL33 family.

It localises to the plastid. It is found in the chloroplast. The protein is Large ribosomal subunit protein bL33c of Morus indica (Mulberry).